Here is a 160-residue protein sequence, read N- to C-terminus: Ribosomal RNA large subunit methyltransferase H (160 aa).

Residues Leu76, Gly108, and 127-132 (LGKMTW) contribute to the S-adenosyl-L-methionine site.

Belongs to the RNA methyltransferase RlmH family. Homodimer.

It localises to the cytoplasm. It catalyses the reaction pseudouridine(1915) in 23S rRNA + S-adenosyl-L-methionine = N(3)-methylpseudouridine(1915) in 23S rRNA + S-adenosyl-L-homocysteine + H(+). Functionally, specifically methylates the pseudouridine at position 1915 (m3Psi1915) in 23S rRNA. The sequence is that of Ribosomal RNA large subunit methyltransferase H from Rhizobium etli (strain ATCC 51251 / DSM 11541 / JCM 21823 / NBRC 15573 / CFN 42).